The chain runs to 274 residues: 4-deoxy-L-threo-5-hexosulose-uronate ketol-isomerase (274 aa).

His192, His194, Glu199, and His241 together coordinate Zn(2+).

This sequence belongs to the KduI family. Zn(2+) serves as cofactor.

It catalyses the reaction 5-dehydro-4-deoxy-D-glucuronate = 3-deoxy-D-glycero-2,5-hexodiulosonate. It participates in glycan metabolism; pectin degradation; 2-dehydro-3-deoxy-D-gluconate from pectin: step 4/5. In terms of biological role, catalyzes the isomerization of 5-dehydro-4-deoxy-D-glucuronate to 3-deoxy-D-glycero-2,5-hexodiulosonate. The polypeptide is 4-deoxy-L-threo-5-hexosulose-uronate ketol-isomerase (Cereibacter sphaeroides (strain ATCC 17029 / ATH 2.4.9) (Rhodobacter sphaeroides)).